A 164-amino-acid polypeptide reads, in one-letter code: Crossover junction endodeoxyribonuclease RuvC (164 aa).

Catalysis depends on residues aspartate 7, glutamate 67, and aspartate 140. Residues aspartate 7, glutamate 67, and aspartate 140 each contribute to the Mg(2+) site.

Belongs to the RuvC family. In terms of assembly, homodimer which binds Holliday junction (HJ) DNA. The HJ becomes 2-fold symmetrical on binding to RuvC with unstacked arms; it has a different conformation from HJ DNA in complex with RuvA. In the full resolvosome a probable DNA-RuvA(4)-RuvB(12)-RuvC(2) complex forms which resolves the HJ. Requires Mg(2+) as cofactor.

It localises to the cytoplasm. It carries out the reaction Endonucleolytic cleavage at a junction such as a reciprocal single-stranded crossover between two homologous DNA duplexes (Holliday junction).. Functionally, the RuvA-RuvB-RuvC complex processes Holliday junction (HJ) DNA during genetic recombination and DNA repair. Endonuclease that resolves HJ intermediates. Cleaves cruciform DNA by making single-stranded nicks across the HJ at symmetrical positions within the homologous arms, yielding a 5'-phosphate and a 3'-hydroxyl group; requires a central core of homology in the junction. The consensus cleavage sequence is 5'-(A/T)TT(C/G)-3'. Cleavage occurs on the 3'-side of the TT dinucleotide at the point of strand exchange. HJ branch migration catalyzed by RuvA-RuvB allows RuvC to scan DNA until it finds its consensus sequence, where it cleaves and resolves the cruciform DNA. In Chloroflexus aurantiacus (strain ATCC 29364 / DSM 637 / Y-400-fl), this protein is Crossover junction endodeoxyribonuclease RuvC.